We begin with the raw amino-acid sequence, 476 residues long: Glycogen synthase (476 aa).

Lysine 15 serves as a coordination point for ADP-alpha-D-glucose.

This sequence belongs to the glycosyltransferase 1 family. Bacterial/plant glycogen synthase subfamily.

It catalyses the reaction [(1-&gt;4)-alpha-D-glucosyl](n) + ADP-alpha-D-glucose = [(1-&gt;4)-alpha-D-glucosyl](n+1) + ADP + H(+). The protein operates within glycan biosynthesis; glycogen biosynthesis. Synthesizes alpha-1,4-glucan chains using ADP-glucose. The chain is Glycogen synthase from Bacillus cereus (strain ATCC 14579 / DSM 31 / CCUG 7414 / JCM 2152 / NBRC 15305 / NCIMB 9373 / NCTC 2599 / NRRL B-3711).